The following is a 224-amino-acid chain: Putative N-acetylmannosamine-6-phosphate 2-epimerase (224 aa).

The protein belongs to the NanE family.

It catalyses the reaction an N-acyl-D-glucosamine 6-phosphate = an N-acyl-D-mannosamine 6-phosphate. The protein operates within amino-sugar metabolism; N-acetylneuraminate degradation; D-fructose 6-phosphate from N-acetylneuraminate: step 3/5. Its function is as follows. Converts N-acetylmannosamine-6-phosphate (ManNAc-6-P) to N-acetylglucosamine-6-phosphate (GlcNAc-6-P). This is Putative N-acetylmannosamine-6-phosphate 2-epimerase from Staphylococcus carnosus (strain TM300).